Consider the following 406-residue polypeptide: Tryptophan synthase beta chain (406 aa).

The residue at position 99 (Lys-99) is an N6-(pyridoxal phosphate)lysine.

This sequence belongs to the TrpB family. In terms of assembly, tetramer of two alpha and two beta chains. Requires pyridoxal 5'-phosphate as cofactor.

The enzyme catalyses (1S,2R)-1-C-(indol-3-yl)glycerol 3-phosphate + L-serine = D-glyceraldehyde 3-phosphate + L-tryptophan + H2O. It functions in the pathway amino-acid biosynthesis; L-tryptophan biosynthesis; L-tryptophan from chorismate: step 5/5. Its function is as follows. The beta subunit is responsible for the synthesis of L-tryptophan from indole and L-serine. In Rhizobium etli (strain CIAT 652), this protein is Tryptophan synthase beta chain.